A 227-amino-acid polypeptide reads, in one-letter code: Cytochrome c oxidase subunit 2 (227 aa).

Residues 1-14 are Mitochondrial intermembrane-facing; that stretch reads MAYPFQLGLQDATS. A helical transmembrane segment spans residues 15–45; the sequence is PIMEELLHFHDHTLMIVFLISSLVLYIISLM. Residues 46-59 lie on the Mitochondrial matrix side of the membrane; sequence LTTKLTHTSTMDAQ. A helical transmembrane segment spans residues 60–87; that stretch reads EVETVWTILPAIILISIALPSLRILYMM. Residues 88-227 are Mitochondrial intermembrane-facing; sequence DEINNPSLTV…YFEAWSTLMM (140 aa). The Cu cation site is built by His-161, Cys-196, Glu-198, Cys-200, His-204, and Met-207. Position 198 (Glu-198) interacts with Mg(2+). Tyr-218 carries the phosphotyrosine modification.

Belongs to the cytochrome c oxidase subunit 2 family. As to quaternary structure, component of the cytochrome c oxidase (complex IV, CIV), a multisubunit enzyme composed of 14 subunits. The complex is composed of a catalytic core of 3 subunits MT-CO1, MT-CO2 and MT-CO3, encoded in the mitochondrial DNA, and 11 supernumerary subunits COX4I, COX5A, COX5B, COX6A, COX6B, COX6C, COX7A, COX7B, COX7C, COX8 and NDUFA4, which are encoded in the nuclear genome. The complex exists as a monomer or a dimer and forms supercomplexes (SCs) in the inner mitochondrial membrane with NADH-ubiquinone oxidoreductase (complex I, CI) and ubiquinol-cytochrome c oxidoreductase (cytochrome b-c1 complex, complex III, CIII), resulting in different assemblies (supercomplex SCI(1)III(2)IV(1) and megacomplex MCI(2)III(2)IV(2)). Found in a complex with TMEM177, COA6, COX18, COX20, SCO1 and SCO2. Interacts with TMEM177 in a COX20-dependent manner. Interacts with COX20. Interacts with COX16. Cu cation serves as cofactor.

The protein resides in the mitochondrion inner membrane. It catalyses the reaction 4 Fe(II)-[cytochrome c] + O2 + 8 H(+)(in) = 4 Fe(III)-[cytochrome c] + 2 H2O + 4 H(+)(out). In terms of biological role, component of the cytochrome c oxidase, the last enzyme in the mitochondrial electron transport chain which drives oxidative phosphorylation. The respiratory chain contains 3 multisubunit complexes succinate dehydrogenase (complex II, CII), ubiquinol-cytochrome c oxidoreductase (cytochrome b-c1 complex, complex III, CIII) and cytochrome c oxidase (complex IV, CIV), that cooperate to transfer electrons derived from NADH and succinate to molecular oxygen, creating an electrochemical gradient over the inner membrane that drives transmembrane transport and the ATP synthase. Cytochrome c oxidase is the component of the respiratory chain that catalyzes the reduction of oxygen to water. Electrons originating from reduced cytochrome c in the intermembrane space (IMS) are transferred via the dinuclear copper A center (CU(A)) of subunit 2 and heme A of subunit 1 to the active site in subunit 1, a binuclear center (BNC) formed by heme A3 and copper B (CU(B)). The BNC reduces molecular oxygen to 2 water molecules using 4 electrons from cytochrome c in the IMS and 4 protons from the mitochondrial matrix. The sequence is that of Cytochrome c oxidase subunit 2 (MT-CO2) from Lycaon pictus (African wild dog).